Consider the following 64-residue polypeptide: Small ribosomal subunit protein bS21 (64 aa).

Belongs to the bacterial ribosomal protein bS21 family.

This is Small ribosomal subunit protein bS21 from Anaeromyxobacter dehalogenans (strain 2CP-1 / ATCC BAA-258).